Here is a 452-residue protein sequence, read N- to C-terminus: Isocitrate dehydrogenase [NADP], mitochondrial (452 aa).

The transit peptide at 1-39 (MAGYLRAVSSLCRASGSTRTWAPAALNVPSWPEQPRRHY) directs the protein to the mitochondrion. N6-acetyllysine is present on residues K45, K48, K67, and K69. An N6-acetyllysine; alternate mark is found at K80 and K106. An N6-succinyllysine; alternate mark is found at K80 and K106. NADP(+)-binding positions include 115 to 117 (TIT) and R122. T117 serves as a coordination point for D-threo-isocitrate. Residues 134–140 (SPNGTIR) and R149 each bind D-threo-isocitrate. K155 bears the N6-acetyllysine mark. An N6-acetyllysine; alternate modification is found at K166. An N6-succinyllysine; alternate modification is found at K166. R172 lines the D-threo-isocitrate pocket. N6-acetyllysine; alternate occurs at positions 180 and 193. An N6-succinyllysine; alternate mark is found at K180 and K193. N6-acetyllysine is present on K199. N6-acetyllysine; alternate is present on K256. The residue at position 256 (K256) is an N6-succinyllysine; alternate. An N6-acetyllysine mark is found at K263, K272, K275, and K280. The residue at position 282 (K282) is an N6-acetyllysine; alternate. K282 carries the N6-succinyllysine; alternate modification. Mn(2+) is bound at residue D291. K299 lines the NADP(+) pocket. Residue D314 coordinates Mn(2+). Residues 349–354 (GTVTRH) and N367 contribute to the NADP(+) site. K384 carries the N6-acetyllysine; alternate modification. At K384 the chain carries N6-succinyllysine; alternate. An N6-acetyllysine mark is found at K400, K413, and K442.

Belongs to the isocitrate and isopropylmalate dehydrogenases family. As to quaternary structure, homodimer. It depends on Mg(2+) as a cofactor. Mn(2+) serves as cofactor. Acetylation at Lys-413 dramatically reduces catalytic activity. Deacetylated by SIRT3.

It is found in the mitochondrion. The catalysed reaction is D-threo-isocitrate + NADP(+) = 2-oxoglutarate + CO2 + NADPH. Functionally, plays a role in intermediary metabolism and energy production. It may tightly associate or interact with the pyruvate dehydrogenase complex. The polypeptide is Isocitrate dehydrogenase [NADP], mitochondrial (Idh2) (Rattus norvegicus (Rat)).